The sequence spans 86 residues: Large ribosomal subunit protein eL43 (86 aa).

Residues 38-59 (CPVCGRKAVRRISTGIWQCQKC) form a C4-type zinc finger.

Belongs to the eukaryotic ribosomal protein eL43 family. Zn(2+) is required as a cofactor.

This chain is Large ribosomal subunit protein eL43, found in Thermococcus gammatolerans (strain DSM 15229 / JCM 11827 / EJ3).